Consider the following 596-residue polypeptide: Succinate dehydrogenase flavoprotein subunit (596 aa).

Residues 18–23, 41–56, and D225 contribute to the FAD site; these read GAGGAG and TKLFPTRSHTVAAQGG. H49 is subject to Tele-8alpha-FAD histidine. Substrate is bound by residues H246 and T258. R290 acts as the Proton acceptor in catalysis. Substrate is bound at residue H357. E391 serves as a coordination point for FAD. R402 contacts substrate. Residue 407 to 408 participates in FAD binding; it reads SL.

This sequence belongs to the FAD-dependent oxidoreductase 2 family. FRD/SDH subfamily. Part of an enzyme complex containing four subunits: a flavoprotein, an iron-sulfur, cytochrome b-556, and a hydrophobic anchor protein. It depends on FAD as a cofactor.

It localises to the cell inner membrane. It catalyses the reaction a quinone + succinate = fumarate + a quinol. It functions in the pathway carbohydrate metabolism; tricarboxylic acid cycle; fumarate from succinate (bacterial route): step 1/1. The polypeptide is Succinate dehydrogenase flavoprotein subunit (sdhA) (Rickettsia felis (strain ATCC VR-1525 / URRWXCal2) (Rickettsia azadi)).